Reading from the N-terminus, the 349-residue chain is Tetraacyldisaccharide 4'-kinase (349 aa).

Position 58-65 (58-65) interacts with ATP; sequence TAGGSGKT.

This sequence belongs to the LpxK family.

It carries out the reaction a lipid A disaccharide + ATP = a lipid IVA + ADP + H(+). It participates in glycolipid biosynthesis; lipid IV(A) biosynthesis; lipid IV(A) from (3R)-3-hydroxytetradecanoyl-[acyl-carrier-protein] and UDP-N-acetyl-alpha-D-glucosamine: step 6/6. Functionally, transfers the gamma-phosphate of ATP to the 4'-position of a tetraacyldisaccharide 1-phosphate intermediate (termed DS-1-P) to form tetraacyldisaccharide 1,4'-bis-phosphate (lipid IVA). This Shewanella amazonensis (strain ATCC BAA-1098 / SB2B) protein is Tetraacyldisaccharide 4'-kinase.